The chain runs to 156 residues: MTIHHDLSPTLNLIRLANGEGLDLPAYESKGAAGMDLRAAVDEAAPLTLLPGKRALVPTGFIFEIPEGFEGQVRPRSGLAFKNGITCLNSPGTVDSDYRGEVKVLLANLGEEAFVISRGMRIAQMVIAPVTQMRVAEITEASETMRGAGGFGSTGV.

Substrate is bound by residues R76–G78, N89, T93–D95, and K103.

Belongs to the dUTPase family. The cofactor is Mg(2+).

The catalysed reaction is dUTP + H2O = dUMP + diphosphate + H(+). The protein operates within pyrimidine metabolism; dUMP biosynthesis; dUMP from dCTP (dUTP route): step 2/2. This enzyme is involved in nucleotide metabolism: it produces dUMP, the immediate precursor of thymidine nucleotides and it decreases the intracellular concentration of dUTP so that uracil cannot be incorporated into DNA. The sequence is that of Deoxyuridine 5'-triphosphate nucleotidohydrolase from Rhizobium johnstonii (strain DSM 114642 / LMG 32736 / 3841) (Rhizobium leguminosarum bv. viciae).